We begin with the raw amino-acid sequence, 346 residues long: MKFAILFGGNSYEHEISIVSAVVLKKVINQNLEFIFCDEERRFYHIPSEKMNSKTFSTKAYKKEKELFIKQGGFFSKGFLKENKLECECVINLIHGRDGEDGKIAALFEFYSIKFIGPRLEASVLSFNKELTKLYAKSVGVKTLDYTILRKNQNSKEKLSFPCIIKPARLGSSIGISIVKDEKDLEYAKDVGFEFDNDLVVEEFKNNIKEYNLAGCMINDEFVFSIIEEPKKKEFLDFEQKYLSFSGHNELIEADLSEELKEKLKDSFKKIYNPLFKGALIRCDFFILDNEIYLNEINPNPGSLANYLFKDFNTTLNALADQISLEKMIKINYNFLHSINGQKGKL.

Residues 133–327 (KLYAKSVGVK…ALADQISLEK (195 aa)) form the ATP-grasp domain. Position 159-211 (159-211 (LSFPCIIKPARLGSSIGISIVKDEKDLEYAKDVGFEFDNDLVVEEFKNNIKEY)) interacts with ATP. Mg(2+)-binding residues include Asp284, Glu296, and Asn298.

Belongs to the D-alanine--D-alanine ligase family. It depends on Mg(2+) as a cofactor. The cofactor is Mn(2+).

The protein resides in the cytoplasm. It carries out the reaction 2 D-alanine + ATP = D-alanyl-D-alanine + ADP + phosphate + H(+). Its pathway is cell wall biogenesis; peptidoglycan biosynthesis. In terms of biological role, cell wall formation. The protein is D-alanine--D-alanine ligase of Campylobacter jejuni subsp. jejuni serotype O:2 (strain ATCC 700819 / NCTC 11168).